We begin with the raw amino-acid sequence, 219 residues long: Large ribosomal subunit protein uL16 (219 aa).

The protein belongs to the universal ribosomal protein uL16 family. Component of the small ribosomal subunit. Mature ribosomes consist of a small (40S) and a large (60S) subunit. The 40S subunit contains about 33 different proteins and 1 molecule of RNA (18S). The 60S subunit contains about 49 different proteins and 3 molecules of RNA (25S, 5.8S and 5S).

In Solanum melongena (Eggplant), this protein is Large ribosomal subunit protein uL16 (RPL10).